The primary structure comprises 553 residues: Hydroxylamine reductase (553 aa).

4 residues coordinate [2Fe-2S] cluster: C3, C6, C18, and C25. Residues H252, E276, C320, C408, C436, C461, E495, and K497 each coordinate hybrid [4Fe-2O-2S] cluster. C408 is modified (cysteine persulfide).

The protein belongs to the HCP family. [2Fe-2S] cluster is required as a cofactor. Hybrid [4Fe-2O-2S] cluster serves as cofactor.

It is found in the cytoplasm. The catalysed reaction is A + NH4(+) + H2O = hydroxylamine + AH2 + H(+). Its function is as follows. Catalyzes the reduction of hydroxylamine to form NH(3) and H(2)O. In Photobacterium phosphoreum, this protein is Hydroxylamine reductase.